The primary structure comprises 154 residues: Large ribosomal subunit protein uL22 (154 aa).

The protein belongs to the universal ribosomal protein uL22 family. Part of the 50S ribosomal subunit.

Functionally, this protein binds specifically to 23S rRNA. It makes multiple contacts with different domains of the 23S rRNA in the assembled 50S subunit and ribosome. Its function is as follows. The globular domain of the protein is located near the polypeptide exit tunnel on the outside of the subunit, while an extended beta-hairpin is found that lines the wall of the exit tunnel in the center of the 70S ribosome. In Methanosphaera stadtmanae (strain ATCC 43021 / DSM 3091 / JCM 11832 / MCB-3), this protein is Large ribosomal subunit protein uL22.